Consider the following 237-residue polypeptide: Thrombin-like enzyme agkihpin-1 (237 aa).

Methionine 1 is a propeptide. The Peptidase S1 domain occupies 2-228 (ILGDDECNIN…HLDWIENIIA (227 aa)). Residues cysteine 27 and cysteine 43 are joined by a disulfide bond. Histidine 42 (charge relay system) is an active-site residue. Asparagine 80 carries N-linked (GlcNAc...) asparagine glycosylation. Aspartate 87 functions as the Charge relay system in the catalytic mechanism. Disulfide bonds link cysteine 119-cysteine 189, cysteine 151-cysteine 168, and cysteine 179-cysteine 204. The Charge relay system role is filled by serine 183.

The protein belongs to the peptidase S1 family. Snake venom subfamily. Expressed by the venom gland.

It localises to the secreted. Its activity is regulated as follows. The hydrolysis of TAMe (tosyl-arginine methyl ester) substrate is activated by Ca(2+), Fe(3+), Mg(2+) and Zn(2+), and inhibited by EDTA, PMSF and DTT. Thrombin-like enzyme that shows fibrinogenolytic activity against bovine fibrinogen alpha and beta chains, but not gamma chain. Hydrolyzes fibrin. Enhances ADP-induced human platelet aggregation. Has arginine esterase activity for TAMe (tosyl-arginine methyl ester) substrate. Reduces thrombin-induced thrombosis. Does not have hemorrhagic activity. Reduces the motility of human liver cancer HepG2 cells in a wound-healing assay. This is Thrombin-like enzyme agkihpin-1 from Gloydius halys (Chinese water mocassin).